Reading from the N-terminus, the 1070-residue chain is RecBCD enzyme subunit RecC (1070 aa).

It belongs to the RecC family. As to quaternary structure, heterotrimer of RecB, RecC and RecD. All subunits contribute to DNA-binding.

Its function is as follows. A helicase/nuclease that prepares dsDNA breaks (DSB) for recombinational DNA repair. Binds to DSBs and unwinds DNA via a highly rapid and processive ATP-dependent bidirectional helicase activity. Unwinds dsDNA until it encounters a Chi (crossover hotspot instigator) sequence from the 3' direction. Cuts ssDNA a few nucleotides 3' to the Chi site. The properties and activities of the enzyme are changed at Chi. The Chi-altered holoenzyme produces a long 3'-ssDNA overhang and facilitates RecA-binding to the ssDNA for homologous DNA recombination and repair. Holoenzyme degrades any linearized DNA that is unable to undergo homologous recombination. In the holoenzyme this subunit recognizes the wild-type Chi sequence, and when added to isolated RecB increases its ATP-dependent helicase processivity. The polypeptide is RecBCD enzyme subunit RecC (Buchnera aphidicola subsp. Acyrthosiphon pisum (strain APS) (Acyrthosiphon pisum symbiotic bacterium)).